Consider the following 247-residue polypeptide: Uracil-DNA glycosylase (247 aa).

The active-site Proton acceptor is the Asp-83.

The protein belongs to the uracil-DNA glycosylase (UDG) superfamily. UNG family.

It is found in the cytoplasm. It carries out the reaction Hydrolyzes single-stranded DNA or mismatched double-stranded DNA and polynucleotides, releasing free uracil.. Its function is as follows. Excises uracil residues from the DNA which can arise as a result of misincorporation of dUMP residues by DNA polymerase or due to deamination of cytosine. The polypeptide is Uracil-DNA glycosylase (Deinococcus radiodurans (strain ATCC 13939 / DSM 20539 / JCM 16871 / CCUG 27074 / LMG 4051 / NBRC 15346 / NCIMB 9279 / VKM B-1422 / R1)).